Here is a 190-residue protein sequence, read N- to C-terminus: GTP cyclohydrolase 1 (190 aa).

Zn(2+) is bound by residues cysteine 80, histidine 83, and cysteine 151.

Belongs to the GTP cyclohydrolase I family. Toroid-shaped homodecamer, composed of two pentamers of five dimers.

The enzyme catalyses GTP + H2O = 7,8-dihydroneopterin 3'-triphosphate + formate + H(+). Its pathway is cofactor biosynthesis; 7,8-dihydroneopterin triphosphate biosynthesis; 7,8-dihydroneopterin triphosphate from GTP: step 1/1. In Rickettsia typhi (strain ATCC VR-144 / Wilmington), this protein is GTP cyclohydrolase 1.